A 106-amino-acid polypeptide reads, in one-letter code: uncharacterized protein (106 aa).

This is an uncharacterized protein from Enterobacteria phage T4 (Bacteriophage T4).